The following is a 150-amino-acid chain: Snaclec bothrojaracin subunit beta (150 aa).

The signal sequence occupies residues 1 to 23 (MGRFIFVSFGLLVVFLSLSGTAA). 3 disulfide bridges follow: Cys-25-Cys-36, Cys-53-Cys-146, and Cys-123-Cys-138. One can recognise a C-type lectin domain in the interval 32–147 (YEGSCYRVFE…CTKLEYFVCE (116 aa)).

This sequence belongs to the snaclec family. In terms of assembly, heterodimer of subunits alpha and beta; disulfide-linked. Expressed by the venom gland.

Its subcellular location is the secreted. In terms of biological role, this potent antithrombotic agent acts in a calcium-independent manner. Exerts its anticoagulant effect by two distinct mechanisms. It binds to activated thrombin through exosite 1, blocking fibrinogen clotting, platelet activation, factor V activation and other effects, and it interacts with prothrombin (F2), decreasing its proteolytic activation -especially in the presence of factor Va. In vivo, intravenous injection before thrombosis induction causes a significant decrease in thrombus weight. Furthermore, BJC shows a prolonged effect by remaining in the plasma bound to prothrombin for at least 12 hours. This is Snaclec bothrojaracin subunit beta from Bothrops jararaca (Jararaca).